Here is a 241-residue protein sequence, read N- to C-terminus: Uridylate kinase (241 aa).

Lysine 15–glycine 18 is a binding site for ATP. Glycine 57 is a binding site for UMP. ATP-binding residues include glycine 58 and arginine 62. Residues aspartate 77 and threonine 138 to threonine 145 each bind UMP. Positions 165, 171, and 174 each coordinate ATP.

This sequence belongs to the UMP kinase family. Homohexamer.

It localises to the cytoplasm. It carries out the reaction UMP + ATP = UDP + ADP. It functions in the pathway pyrimidine metabolism; CTP biosynthesis via de novo pathway; UDP from UMP (UMPK route): step 1/1. Inhibited by UTP. In terms of biological role, catalyzes the reversible phosphorylation of UMP to UDP. This chain is Uridylate kinase, found in Dichelobacter nodosus (strain VCS1703A).